Here is a 463-residue protein sequence, read N- to C-terminus: Probable glucan endo-1,3-beta-glucosidase eglC (463 aa).

Positions 1–18 are cleaved as a signal peptide; the sequence is MQLTHLLAFALSLATSEA. Asn84 is a glycosylation site (N-linked (GlcNAc...) asparagine). Residue Glu128 is the Proton donor of the active site. N-linked (GlcNAc...) asparagine glycosylation occurs at Asn183. Glu239 (nucleophile) is an active-site residue. N-linked (GlcNAc...) asparagine glycosylation occurs at Asn312. 2 disordered regions span residues 317 to 354 and 396 to 430; these read SASA…SSAV and SGSS…NSGA. Gly440 is lipidated: GPI-anchor amidated glycine. A propeptide spans 441-463 (removed in mature form); that stretch reads GASSVSGSVFGALVAVFAFVATL.

Belongs to the glycosyl hydrolase 17 family. In terms of processing, the GPI-anchor is attached to the protein in the endoplasmic reticulum and serves to target the protein to the cell surface. There, the glucosamine-inositol phospholipid moiety is cleaved off and the GPI-modified mannoprotein is covalently attached via its lipidless GPI glycan remnant to the 1,6-beta-glucan of the outer cell wall layer.

The protein localises to the cell membrane. It localises to the secreted. Its subcellular location is the cell wall. The enzyme catalyses Hydrolysis of (1-&gt;3)-beta-D-glucosidic linkages in (1-&gt;3)-beta-D-glucans.. Functionally, glucanases play a role in cell expansion during growth, in cell-cell fusion during mating, and in spore release during sporulation. This enzyme may be involved in beta-glucan degradation and also function biosynthetically as a transglycosylase. This is Probable glucan endo-1,3-beta-glucosidase eglC (eglC) from Aspergillus oryzae (strain ATCC 42149 / RIB 40) (Yellow koji mold).